A 311-amino-acid polypeptide reads, in one-letter code: Long form salivary protein D7L1 (311 aa).

Positions M1–S16 are cleaved as a signal peptide. 2 cysteine pairs are disulfide-bonded: C34-C67 and C63-C120. S146, R149, Y153, and K160 together coordinate ADP. 3 disulfide bridges follow: C170–C202, C183–C311, and C244–C258. 3 residues coordinate ADP: N281, Y282, and S283.

It belongs to the PBP/GOBP family. In terms of tissue distribution, distal lateral and medial lobes of female mosquito salivary gland (at protein level). Expressed in the head and thorax of the female mosquitoes, where the salivary glands are located. Expressed in salivary gland. Not detected in the female mosquito abdomen. Not detected in the male mosquito tissues.

The protein localises to the secreted. Functionally, modulates blood feeding of female mosquitoes on vertebrate species by binding and sequestering different mediators involved in the host response. Binds adenine, adenosine, AMP, ADP and ATP, with the highest affinity to ATP and ADP. Inhibits agonist-induced platelet aggregation and hemostasis. This chain is Long form salivary protein D7L1, found in Culex quinquefasciatus (Southern house mosquito).